A 111-amino-acid chain; its full sequence is uncharacterized protein (111 aa).

The segment at 66 to 94 (PVPTATPSLPRSGFTSSAKKIKESRKQKS) is disordered. Residues 70–83 (ATPSLPRSGFTSSA) show a composition bias toward polar residues.

The protein localises to the plastid. The protein resides in the chloroplast. This is an uncharacterized protein from Chlamydomonas reinhardtii (Chlamydomonas smithii).